The sequence spans 386 residues: Succinate--CoA ligase [ADP-forming] subunit beta (386 aa).

Positions 9-244 (KEILHKFNVP…YDEEVKEEIE (236 aa)) constitute an ATP-grasp domain. ATP is bound by residues Lys46, 53–55 (GRG), Glu99, Ser102, and Glu107. Mg(2+) is bound by residues Asn199 and Asp213. Substrate contacts are provided by residues Asn264 and 321-323 (GIM).

Belongs to the succinate/malate CoA ligase beta subunit family. Heterotetramer of two alpha and two beta subunits. Requires Mg(2+) as cofactor.

It catalyses the reaction succinate + ATP + CoA = succinyl-CoA + ADP + phosphate. The catalysed reaction is GTP + succinate + CoA = succinyl-CoA + GDP + phosphate. It functions in the pathway carbohydrate metabolism; tricarboxylic acid cycle; succinate from succinyl-CoA (ligase route): step 1/1. Functionally, succinyl-CoA synthetase functions in the citric acid cycle (TCA), coupling the hydrolysis of succinyl-CoA to the synthesis of either ATP or GTP and thus represents the only step of substrate-level phosphorylation in the TCA. The beta subunit provides nucleotide specificity of the enzyme and binds the substrate succinate, while the binding sites for coenzyme A and phosphate are found in the alpha subunit. The polypeptide is Succinate--CoA ligase [ADP-forming] subunit beta (Wolbachia sp. subsp. Brugia malayi (strain TRS)).